Consider the following 350-residue polypeptide: Phosphate acyltransferase (350 aa).

Belongs to the PlsX family. As to quaternary structure, homodimer. Probably interacts with PlsY.

The protein localises to the cytoplasm. It catalyses the reaction a fatty acyl-[ACP] + phosphate = an acyl phosphate + holo-[ACP]. It participates in lipid metabolism; phospholipid metabolism. Catalyzes the reversible formation of acyl-phosphate (acyl-PO(4)) from acyl-[acyl-carrier-protein] (acyl-ACP). This enzyme utilizes acyl-ACP as fatty acyl donor, but not acyl-CoA. This is Phosphate acyltransferase from Phenylobacterium zucineum (strain HLK1).